Reading from the N-terminus, the 277-residue chain is Alternative cytochrome c oxidase subunit 2 (277 aa).

Residues 1 to 40 are Periplasmic-facing; the sequence is MAVALILLLIAIGSVLFHLFSPWWWTPIATNWGYIDDTIN. The chain crosses the membrane as a helical span at residues 41-61; sequence ITFWITGFVFTAVILFMAYCV. Over 62 to 83 the chain is Cytoplasmic; sequence FRFHHKEGRQAAYNPENKKLEW. Residues 84 to 104 form a helical membrane-spanning segment; sequence WLSVGTGVGVAAMLAPGLVVW. Topologically, residues 105–277 are periplasmic; the sequence is HQFVTVPADA…VRAKYNSGDD (173 aa). Residues His190, Cys225, Cys229, and His233 each coordinate Cu cation.

It belongs to the cytochrome c oxidase subunit 2 family.

The protein resides in the cell membrane. It catalyses the reaction 4 Fe(II)-[cytochrome c] + O2 + 8 H(+)(in) = 4 Fe(III)-[cytochrome c] + 2 H2O + 4 H(+)(out). In terms of biological role, cytochrome c oxidase is the component of the respiratory chain that catalyzes the reduction of oxygen to water. Subunits 1-3 form the functional core of the enzyme complex. Subunit 2 transfers the electrons from cytochrome c via its binuclear copper A center to the bimetallic center of the catalytic subunit 1. The protein is Alternative cytochrome c oxidase subunit 2 (coxM) of Bradyrhizobium diazoefficiens (strain JCM 10833 / BCRC 13528 / IAM 13628 / NBRC 14792 / USDA 110).